A 385-amino-acid polypeptide reads, in one-letter code: MEIPRQEIHIEIDNSIPSSKEFKTGLADAKPVVLMSALRSLHAGYFRISLSLCSQALLWKIMIAPESPSMSHMHSKLPSMAFHLLWYLALVTQVSLCFLYALKCIFFFDKVKEEFLHYIGVNYLYAPSISWLLMLQSAPMMEPNSVLYQTLFWIFAVPVLTLDIKLYGQWFTTEKRFLSMLANPASQVSVIANLVAARGAAEMGWNECALCMFSLGMVHYLVIFVTLYQRLPGGNNFPAKLRPIFFLFVAAPAMASLAWNSICGTFDAVAKMLFFLSLFIFMSLVCRPNLFKKSMKRFNVAWWAYSFPLTFLALDSVQYAQEVKDPVGSGLMLIFSSISVLIFLGMMVLTAANSNRLLRHDPVLGSATDPKDKQKTLSLNATNQN.

The Cytoplasmic portion of the chain corresponds to Met1 to His42. Residues Ala43–Pro65 traverse the membrane as a helical segment. Residues Glu66–Ala81 are Extracellular-facing. A helical membrane pass occupies residues Phe82–Leu102. The Cytoplasmic segment spans residues Lys103–Glu114. The chain crosses the membrane as a helical span at residues Phe115–Leu135. At Gln136 to Thr150 the chain is on the extracellular side. The chain crosses the membrane as a helical span at residues Leu151 to Phe171. Residues Thr172–Arg176 lie on the Cytoplasmic side of the membrane. The chain crosses the membrane as a helical span at residues Phe177–Ala197. The Extracellular segment spans residues Arg198–Glu207. The helical transmembrane segment at Cys208–Tyr228 threads the bilayer. The Cytoplasmic portion of the chain corresponds to Gln229–Pro243. Residues Ile244–Gly264 traverse the membrane as a helical segment. Thr265 is a topological domain (extracellular). Residues Phe266–Cys286 traverse the membrane as a helical segment. Residues Arg287–Asn299 lie on the Cytoplasmic side of the membrane. The helical transmembrane segment at Val300 to Ala320 threads the bilayer. At Gln321–Gly330 the chain is on the extracellular side. A helical transmembrane segment spans residues Leu331–Ala351. Topologically, residues Ala352 to Asn385 are cytoplasmic. Residues Ser366–Asn385 form a disordered region. The segment covering Thr376–Asn385 has biased composition (polar residues).

The protein belongs to the SLAC1 S-type anion channel family. As to quaternary structure, homotrimer. As to expression, expressed in the vascular systems of root.

It is found in the cell membrane. Slow, weak voltage-dependent S-type anion efflux channel involved in maintenance of anion homeostasis. In Arabidopsis thaliana (Mouse-ear cress), this protein is S-type anion channel SLAH1 (SLAH1).